An 861-amino-acid polypeptide reads, in one-letter code: MKRKHIMIYAASLLVSVLAHAFFVKEWAEGRYMTGPGDGLAQMIVFKKLLFDQYTHGNFFYNYSFGLGGGTFSQLGYYFSASFLFLAVSAAVWLLQAVQLIGETDTLFWAESAVFISIFKLSLIIFTSASVFHYLLKHRAASFTGAVLYGVSIIYFRHEAYWEFFTDTMVWLPLLVLGAEKIIRERRPAWFIVACSLTLINNFYFAYINLIFIGIYVLFRWLIRLEPHEEKRWIQIRLFLVSGFISFGISAAAFVPVVYGFLNNLRPPYSQKIEWLNFDDNILFSSRIIIVPAAFLLFLFIISFYKNRVFRLFAGLSLLFILFHFSPYAASVFNGFSAPQNRFEYVLAFTIAGAAAAGLSQLSELKRKELLPAAAVVLLLYLYHIQRYKLDIWKPANESILLLLLMTIAALFAAAFAKKRAKMAVYGIIILSSLFVANSYQKYALSEGGDLDSVTKEYLTSEEYRGRESSELIRRLQKEDDDPLMRIDWMNGVRNNTPIIYGFNGFSAYSSILNKDLLAFYWNDLSIDMGRESVSRYASLGDRANLYSLLYGKYYMTEKTNEASVPYGFKKHLETEHYAVYENQYMLPFVKTADAIYSESELDRLPALAKEQAMLKGIILKDPSGKTEQTPKPSNLITKSDITAKQAQYQNGLLTVTGENGGELIITPKQPSSAPGDYYVSFYLKSKAKDKGFTLKVNDYVTTRKSNKSIYKTGVNNITVRVPKSGHISINLPKGTYELRNIALYEENYQTLKNAVMQNKTEKADKLNWNKNRLTFSYHLSKDQYIMLPIPYEKGWELKINGKTQKIEKADYAFIGFKAQKGDNHIELTYYPPYFKISAIISLVSLLLAVFYIRRKKPGSI.

12 helical membrane-spanning segments follow: residues 4-24 (KHIMIYAASLLVSVLAHAFFV), 75-95 (LGYYFSASFLFLAVSAAVWLL), 106-126 (TLFWAESAVFISIFKLSLIIF), 159-179 (EAYWEFFTDTMVWLPLLVLGA), 199-219 (LINNFYFAYINLIFIGIYVLF), 238-258 (LFLVSGFISFGISAAAFVPVV), 282-302 (ILFSSRIIIVPAAFLLFLFII), 313-333 (FAGLSLLFILFHFSPYAASVF), 343-363 (FEYVLAFTIAGAAAAGLSQLS), 370-385 (LLPAAAVVLLLYLYHI), 396-416 (ANESILLLLLMTIAALFAAAF), and 425-445 (VYGIIILSSLFVANSYQKYAL). Positions 738 to 766 (ELRNIALYEENYQTLKNAVMQNKTEKADK) form a coiled coil. Residues 833–853 (PYFKISAIISLVSLLLAVFYI) traverse the membrane as a helical segment.

The protein localises to the cell membrane. This is an uncharacterized protein from Bacillus subtilis (strain 168).